The chain runs to 394 residues: Ribulose bisphosphate carboxylase large chain (394 aa).

The residue at position 5 (Lys5) is an N6,N6,N6-trimethyllysine. Substrate-binding residues include Asn114 and Thr164. The Proton acceptor role is filled by Lys166. Lys168 serves as a coordination point for substrate. Lys192, Asp194, and Glu195 together coordinate Mg(2+). An N6-carboxylysine modification is found at Lys192. The active-site Proton acceptor is the His285. Residues Arg286, His318, and Ser370 each coordinate substrate.

This sequence belongs to the RuBisCO large chain family. Type I subfamily. Heterohexadecamer of 8 large chains and 8 small chains. It depends on Mg(2+) as a cofactor.

Its subcellular location is the plastid. The protein localises to the chloroplast. It catalyses the reaction 2 (2R)-3-phosphoglycerate + 2 H(+) = D-ribulose 1,5-bisphosphate + CO2 + H2O. It carries out the reaction D-ribulose 1,5-bisphosphate + O2 = 2-phosphoglycolate + (2R)-3-phosphoglycerate + 2 H(+). In terms of biological role, ruBisCO catalyzes two reactions: the carboxylation of D-ribulose 1,5-bisphosphate, the primary event in carbon dioxide fixation, as well as the oxidative fragmentation of the pentose substrate in the photorespiration process. Both reactions occur simultaneously and in competition at the same active site. This Cabomba caroliniana (Carolina fanwort) protein is Ribulose bisphosphate carboxylase large chain (rbcL).